A 534-amino-acid chain; its full sequence is Protein tweety homolog 2 (534 aa).

Over 1–44 (MAAARVEYIAPWWVYWLHNFPHVDLSLRQKSPDFNPKDPGYQQT) the chain is Extracellular. The helical transmembrane segment at 45-65 (LLFVALIVALCAAVNLLFVSV) threads the bilayer. The Cytoplasmic segment spans residues 66 to 87 (YLICLCCCKKEDETETKKTSSC). Residues 88–108 (CVTWTAAVSGLLCCAAVGIGF) form a helical membrane-spanning segment. Over 109–213 (YGNSETNDGV…QTSTIEYYRW (105 aa)) the chain is Extracellular. Ca(2+) is bound by residues E113 and D116. An N-linked (GlcNAc...) asparagine glycan is attached at N129. The short motif at 164 to 166 (RGD) is the RGD element. N197 is a glycosylation site (N-linked (GlcNAc...) asparagine). A helical transmembrane segment spans residues 214–234 (LSYLLLFISYVVICLVTCVGL). Residues 235–240 (AKKSKC) lie on the Cytoplasmic side of the membrane. Residues 241 to 261 (LLLIMLCFGLIALMLSWTSLA) form a helical membrane-spanning segment. Residues 262 to 388 (LETSSAMGTS…IGICYDGVEG (127 aa)) lie on the Extracellular side of the membrane. 2 cysteine pairs are disulfide-bonded: C274-C382 and C300-C367. N-linked (GlcNAc...) asparagine glycosylation is found at N283 and N352. A helical transmembrane segment spans residues 389–409 (MLYLGLFSLLAALAFTAMVCA). Topologically, residues 410-534 (MPQAWKHLEA…SSIYSNVFPA (125 aa)) are cytoplasmic.

Belongs to the tweety family. Forms cis-homodimers in the presence of Ca(+2) and forms monomers and trans-dimers in the absence of Ca(2+).

The protein resides in the cell membrane. It carries out the reaction chloride(in) = chloride(out). It catalyses the reaction L-glutamate(out) = L-glutamate(in). In terms of biological role, may act as a calcium-independent, swelling-dependent volume-regulated anion channel (VRAC-swell) which plays a pivotal role in the process of regulatory volume decrease (RVD) in the brain through the efflux of anions like chloride and organic osmolytes like glutamate. Probable large-conductance Ca(2+)-activated chloride channel. The protein is Protein tweety homolog 2 (ttyh2) of Xenopus tropicalis (Western clawed frog).